A 243-amino-acid chain; its full sequence is GTP cyclohydrolase 1 type 2 (243 aa).

The a divalent metal cation site is built by His-63, His-64, Asp-102, His-209, and Glu-213.

This sequence belongs to the GTP cyclohydrolase I type 2/NIF3 family. Homohexamer.

It carries out the reaction GTP + H2O = 7,8-dihydroneopterin 3'-triphosphate + formate + H(+). It participates in cofactor biosynthesis; 7,8-dihydroneopterin triphosphate biosynthesis; 7,8-dihydroneopterin triphosphate from GTP: step 1/1. In terms of biological role, converts GTP to dihydroneopterin triphosphate. Is not active with GDP, GMP, ATP, CTP or UTP as substrate. This is GTP cyclohydrolase 1 type 2 from Helicobacter pylori (strain ATCC 700392 / 26695) (Campylobacter pylori).